The following is a 60-amino-acid chain: Large ribosomal subunit protein uL30 (60 aa).

The protein belongs to the universal ribosomal protein uL30 family. In terms of assembly, part of the 50S ribosomal subunit.

In Streptomyces filamentosus (Streptomyces roseosporus), this protein is Large ribosomal subunit protein uL30.